We begin with the raw amino-acid sequence, 98 residues long: Citrate lyase acyl carrier protein (98 aa).

S14 is subject to O-(phosphoribosyl dephospho-coenzyme A)serine.

This sequence belongs to the CitD family. Oligomer with a subunit composition of (alpha,beta,gamma)6.

Its subcellular location is the cytoplasm. In terms of biological role, covalent carrier of the coenzyme of citrate lyase. The polypeptide is Citrate lyase acyl carrier protein (Salmonella arizonae (strain ATCC BAA-731 / CDC346-86 / RSK2980)).